Consider the following 387-residue polypeptide: Succinyl-diaminopimelate desuccinylase (387 aa).

Position 75 (histidine 75) interacts with Zn(2+). The active site involves aspartate 77. Aspartate 108 serves as a coordination point for Zn(2+). Residue glutamate 139 is the Proton acceptor of the active site. Zn(2+)-binding residues include glutamate 140, glutamate 168, and histidine 357.

It belongs to the peptidase M20A family. DapE subfamily. As to quaternary structure, homodimer. Zn(2+) serves as cofactor. Co(2+) is required as a cofactor.

The catalysed reaction is N-succinyl-(2S,6S)-2,6-diaminopimelate + H2O = (2S,6S)-2,6-diaminopimelate + succinate. It functions in the pathway amino-acid biosynthesis; L-lysine biosynthesis via DAP pathway; LL-2,6-diaminopimelate from (S)-tetrahydrodipicolinate (succinylase route): step 3/3. Catalyzes the hydrolysis of N-succinyl-L,L-diaminopimelic acid (SDAP), forming succinate and LL-2,6-diaminopimelate (DAP), an intermediate involved in the bacterial biosynthesis of lysine and meso-diaminopimelic acid, an essential component of bacterial cell walls. The chain is Succinyl-diaminopimelate desuccinylase from Caulobacter sp. (strain K31).